A 173-amino-acid polypeptide reads, in one-letter code: MAGSVNKVIIIGNLGRDPEVRSFQNGGKVVNLRIATSEQWRDRASGERKERTEWHSVAIFDENLARVAEQYLRKGSTVYIEGQLETRKWQDQSGQDRYSTEVVLRPFRSSLTMLGGRGEGAGAGGGMGGGGYEDRGGPDNYDNYGSGPRGGASSGGAPSGGGRRNDLDDEIPF.

An SSB domain is found at 5-111; it reads VNKVIIIGNL…VVLRPFRSSL (107 aa). The interval 113–173 is disordered; that stretch reads MLGGRGEGAG…RNDLDDEIPF (61 aa). 2 stretches are compositionally biased toward gly residues: residues 115 to 131 and 147 to 162; these read GGRG…GGGG and GPRG…SGGG. The short motif at 168–173 is the Important for interaction with partner proteins element; sequence DDEIPF.

In terms of assembly, homotetramer.

Its function is as follows. Plays an important role in DNA replication, recombination and repair. Binds to ssDNA and to an array of partner proteins to recruit them to their sites of action during DNA metabolism. The chain is Single-stranded DNA-binding protein (ssb) from Cereibacter sphaeroides (strain ATCC 17023 / DSM 158 / JCM 6121 / CCUG 31486 / LMG 2827 / NBRC 12203 / NCIMB 8253 / ATH 2.4.1.) (Rhodobacter sphaeroides).